A 94-amino-acid polypeptide reads, in one-letter code: uncharacterized protein (94 aa).

An N-terminal signal peptide occupies residues 1–25 (MRAAIAVLFIALVGLATYHLVMSQA).

This is an uncharacterized protein from Archaeoglobus fulgidus (strain ATCC 49558 / DSM 4304 / JCM 9628 / NBRC 100126 / VC-16).